The following is a 471-amino-acid chain: Extracellular endo-alpha-(1-&gt;5)-L-arabinanase (471 aa).

Residues 1–19 (MRFLFLMITLTALTGYILA) form the signal peptide. Residue Asp32 is the Proton acceptor of the active site. Substrate is bound by residues Asp32, Gly117, 167–170 (NALD), 187–189 (SWF), and 219–223 (HSSME). The Proton donor role is filled by Glu223. His314 serves as a coordination point for Ca(2+).

It belongs to the glycosyl hydrolase 43 family. Monomer. Ca(2+) serves as cofactor.

It localises to the secreted. It catalyses the reaction Endohydrolysis of (1-&gt;5)-alpha-arabinofuranosidic linkages in (1-&gt;5)-arabinans.. It participates in glycan metabolism; L-arabinan degradation. Its function is as follows. Involved in the degradation of arabinan and is a key enzyme in the complete degradation of the plant cell wall. Catalyzes the internal cleavage of alpha-(1-&gt;5)-L-arabinofuranosyl residues in different arabinan-containing polysaccharides, and releases arabinotriose and arabinobiose as end products. It acts on branched arabinan (from sugar beet), but more slowly when compared to linear or debranched arabinan. The sequence is that of Extracellular endo-alpha-(1-&gt;5)-L-arabinanase from Thermotoga petrophila (strain ATCC BAA-488 / DSM 13995 / JCM 10881 / RKU-1).